The primary structure comprises 550 residues: MTPADLAQLLKATAAAVLAEHGLDSAALPDTVTVERPRNPEHGDYATNLALQLGKKVGANPRELAGWLAEALAASDGIAAADVAGPGFVNLRIEASAQNVMVSNVLSAGADYGHSAVLAGKKVNLEFVSANPTGPIHIGGTRWAAVGDALGRLLTTQGAAVTREYYFNDHGAQIDRFSNSLIAAAKGEPAPEDGYAGTYIADIASQVVAKEPGVLDQPDDRMRETFRAIGVNLMFDHIKESLHEFGTDFDVYTHEDSMHTSGRVEQAIDKLRETGFAYEKDGAVWLRTTDFGDDKDRVVIKSDGKPAYIAGDLAYFLDKRKRGFDLCIYMLGADHHGYIARLKASAAALGDDPDTVEVLIGQMVNLVRDGQPVRMSKRAGTVITLDDLVEAIGVDAARYSLIRSSVDTPIDIDLELWSSASNENPVYYVQYAHARLSALARNAAELGIAPDTAHLDLLTHDKEGVLIRNIGEFPRILATAAELREPHRVSRYLEDLAGDYHRFYDACRVLPQGDEAPGDLHAARLALCAATRQVIANGLDILGVSAPERM.

The short motif at 130 to 140 (ANPTGPIHIGG) is the 'HIGH' region element.

It belongs to the class-I aminoacyl-tRNA synthetase family. Monomer.

Its subcellular location is the cytoplasm. It carries out the reaction tRNA(Arg) + L-arginine + ATP = L-arginyl-tRNA(Arg) + AMP + diphosphate. In Mycolicibacterium gilvum (strain PYR-GCK) (Mycobacterium gilvum (strain PYR-GCK)), this protein is Arginine--tRNA ligase.